Reading from the N-terminus, the 110-residue chain is Large ribosomal subunit protein uL22 (110 aa).

Belongs to the universal ribosomal protein uL22 family. In terms of assembly, part of the 50S ribosomal subunit.

Functionally, this protein binds specifically to 23S rRNA; its binding is stimulated by other ribosomal proteins, e.g. L4, L17, and L20. It is important during the early stages of 50S assembly. It makes multiple contacts with different domains of the 23S rRNA in the assembled 50S subunit and ribosome. The globular domain of the protein is located near the polypeptide exit tunnel on the outside of the subunit, while an extended beta-hairpin is found that lines the wall of the exit tunnel in the center of the 70S ribosome. The sequence is that of Large ribosomal subunit protein uL22 from Histophilus somni (strain 2336) (Haemophilus somnus).